A 155-amino-acid chain; its full sequence is 6,7-dimethyl-8-ribityllumazine synthase (155 aa).

Residues Phe23, 57–59, and 81–83 contribute to the 5-amino-6-(D-ribitylamino)uracil site; these read AFE and AVI. 86-87 contacts (2S)-2-hydroxy-3-oxobutyl phosphate; it reads AT. The active-site Proton donor is His89. Position 114 (Phe114) interacts with 5-amino-6-(D-ribitylamino)uracil. Position 128 (Arg128) interacts with (2S)-2-hydroxy-3-oxobutyl phosphate.

Belongs to the DMRL synthase family.

It catalyses the reaction (2S)-2-hydroxy-3-oxobutyl phosphate + 5-amino-6-(D-ribitylamino)uracil = 6,7-dimethyl-8-(1-D-ribityl)lumazine + phosphate + 2 H2O + H(+). It participates in cofactor biosynthesis; riboflavin biosynthesis; riboflavin from 2-hydroxy-3-oxobutyl phosphate and 5-amino-6-(D-ribitylamino)uracil: step 1/2. Functionally, catalyzes the formation of 6,7-dimethyl-8-ribityllumazine by condensation of 5-amino-6-(D-ribitylamino)uracil with 3,4-dihydroxy-2-butanone 4-phosphate. This is the penultimate step in the biosynthesis of riboflavin. This is 6,7-dimethyl-8-ribityllumazine synthase from Pelotomaculum thermopropionicum (strain DSM 13744 / JCM 10971 / SI).